Here is a 317-residue protein sequence, read N- to C-terminus: Succinate receptor 1 (317 aa).

Residues 1 to 23 (MAQNLSCENWLATEAILNKYYLS) are Extracellular-facing. N-linked (GlcNAc...) asparagine glycosylation occurs at asparagine 4. The helical transmembrane segment at 24–47 (AFYAIEFIFGLLGNVTVVFGYLFC) threads the bilayer. The Cytoplasmic segment spans residues 48–55 (MKNWNSSN). A helical transmembrane segment spans residues 56–76 (VYLFNLSISDFAFLCTLPILI). Over 77–101 (KSYANDKGTYGDVLCISNRYVLHTN) the chain is Extracellular. Cysteine 91 and cysteine 168 are disulfide-bonded. Residues 102–119 (LYTSILFLTFISMDRYLL) form a helical membrane-spanning segment. At 120 to 133 (MKYPFREHFLQKKE) the chain is on the cytoplasmic side. The chain crosses the membrane as a helical span at residues 134–157 (FAILISLAVWALVTLEVLPMLTFI). The Extracellular portion of the chain corresponds to 158-180 (NSVPKEEGSNCIDYASSGNPEHN). Residues 181–204 (LIYSLCLTLLGFLIPLSVMCFFYY) traverse the membrane as a helical segment. Topologically, residues 205 to 228 (KMVVFLKRRSQQQATALPLDKPQR) are cytoplasmic. A helical transmembrane segment spans residues 229-246 (LVVLAVVIFSILFTPYHI). The Extracellular portion of the chain corresponds to 247–277 (MRNLRIASRLDSWPQGCTQKAIKSIYTLTRP). The helical transmembrane segment at 278 to 294 (LAFLNSAINPIFYFLMG) threads the bilayer. The Cytoplasmic segment spans residues 295-317 (DHYREMLISKFRQYFKSLTSFRT).

The protein belongs to the G-protein coupled receptor 1 family. As to expression, predominantly expressed in the kidney (proximal and distal tubules and the juxtaglomerular apparatus). Weakly expressed in liver, spleen and small intestine. Highly expressed in immature dendritic cells, expression rapidly downregulates after maturation. Also expressed in macrophages. Specifically expressed in intestinal tuft cells. Expression in whole muscle is attributable to major non-myofibrillar resident cell types, including stromal, endothelial and satellite cell populations.

The protein localises to the cell membrane. Its function is as follows. G protein-coupled receptor for succinate able to mediate signaling through Gq/GNAQ or Gi/GNAI second messengers depending on the cell type and the processes regulated. Succinate-SUCNR1 signaling serves as a link between metabolic stress, inflammation and energy homeostasis. In macrophages, plays a range of immune-regulatory roles. During inflammation, succinate-SUCNR1 signaling may act as an anti-inflammatory mediator or boost inflammation depending on the inflammatory status of cells. Hyperpolarizes M2 macrophages versus M1 phenotype through Gq signaling by regulating the transcription of genes involved in immune function. In activated M1 macrophages, plays a pro-inflammatory role in response to LPS. Expressed in dendritic cells, where it is involved in the sensing of immunological danger and enhances immunity. Mediates succinate triggered intracelleular calcium mobilization, induces migratory responses and acts in synergy with Toll-like receptor ligands for the production of proinflammatory cytokines as well as an enhancement of antigen-specific activation of helper T cells. In the small intestine, mediates the activation of tuft cells by dietary succinate and triggers type 2 immunity. In adipocytes, plays an important role in the control of energy metabolism. In response to succinate, controls leptin expression in an AMPK-JNK-CEBPA-dependent as well as circadian clock-regulated manner. In muscle tissue, is expressed in non-muscle cells and coordinates muscle remodeling in response to the succinate produced during exercise training in a paracrine manner. In retina, acts as a mediator of vessel growth during retinal development. In response to succinate, regulates the production of angiogenic factors, including VEGF, by retinal ganglion neurons. In Mus musculus (Mouse), this protein is Succinate receptor 1 (Sucnr1).